A 1058-amino-acid chain; its full sequence is Carbamoyl phosphate synthase large chain (1058 aa).

The tract at residues M1 to E401 is carboxyphosphate synthetic domain. ATP contacts are provided by R129, R169, G175, G176, R208, I210, E215, G241, I242, H243, Q284, and E298. The 195-residue stretch at K133 to V327 folds into the ATP-grasp 1 domain. Mg(2+)-binding residues include Q284, E298, and N300. Q284, E298, and N300 together coordinate Mn(2+). The interval I402–S546 is oligomerization domain. The segment at I547–Y929 is carbamoyl phosphate synthetic domain. The region spanning E671 to L861 is the ATP-grasp 2 domain. The ATP site is built by R707, S746, I748, E752, G777, V778, H779, S780, Q820, and E832. Mg(2+) contacts are provided by Q820, E832, and N834. Residues Q820, E832, and N834 each contribute to the Mn(2+) site. The MGS-like domain occupies L930–I1058. An allosteric domain region spans residues L930–I1058.

It belongs to the CarB family. In terms of assembly, composed of two chains; the small (or glutamine) chain promotes the hydrolysis of glutamine to ammonia, which is used by the large (or ammonia) chain to synthesize carbamoyl phosphate. Tetramer of heterodimers (alpha,beta)4. Requires Mg(2+) as cofactor. Mn(2+) is required as a cofactor.

It catalyses the reaction hydrogencarbonate + L-glutamine + 2 ATP + H2O = carbamoyl phosphate + L-glutamate + 2 ADP + phosphate + 2 H(+). It carries out the reaction hydrogencarbonate + NH4(+) + 2 ATP = carbamoyl phosphate + 2 ADP + phosphate + 2 H(+). It participates in amino-acid biosynthesis; L-arginine biosynthesis; carbamoyl phosphate from bicarbonate: step 1/1. The protein operates within pyrimidine metabolism; UMP biosynthesis via de novo pathway; (S)-dihydroorotate from bicarbonate: step 1/3. Functionally, large subunit of the glutamine-dependent carbamoyl phosphate synthetase (CPSase). CPSase catalyzes the formation of carbamoyl phosphate from the ammonia moiety of glutamine, carbonate, and phosphate donated by ATP, constituting the first step of 2 biosynthetic pathways, one leading to arginine and/or urea and the other to pyrimidine nucleotides. The large subunit (synthetase) binds the substrates ammonia (free or transferred from glutamine from the small subunit), hydrogencarbonate and ATP and carries out an ATP-coupled ligase reaction, activating hydrogencarbonate by forming carboxy phosphate which reacts with ammonia to form carbamoyl phosphate. This is Carbamoyl phosphate synthase large chain from Streptococcus pneumoniae (strain JJA).